The primary structure comprises 438 residues: GTPase Obg (438 aa).

The region spanning 1–159 is the Obg domain; that stretch reads MAFRDVLNIE…RRVRLELRLI (159 aa). The OBG-type G domain occupies 160-332; it reads ADVGLVGYPN…LRETLFQLLP (173 aa). ATP-binding positions include 166-173, 191-195, 219-222, 285-288, and 313-315; these read GYPNAGKS, FTTLS, DIPG, NKVE, and SAK. Residues Ser-173 and Thr-193 each contribute to the Mg(2+) site. Positions 357–435 constitute an OCT domain; it reads IVFREDAPAK…IGTFRFEYFD (79 aa).

Belongs to the TRAFAC class OBG-HflX-like GTPase superfamily. OBG GTPase family. In terms of assembly, monomer. Requires Mg(2+) as cofactor.

The protein resides in the cytoplasm. An essential GTPase which binds GTP, GDP and possibly (p)ppGpp with moderate affinity, with high nucleotide exchange rates and a fairly low GTP hydrolysis rate. Plays a role in control of the cell cycle, stress response, ribosome biogenesis and in those bacteria that undergo differentiation, in morphogenesis control. This is GTPase Obg from Deinococcus radiodurans (strain ATCC 13939 / DSM 20539 / JCM 16871 / CCUG 27074 / LMG 4051 / NBRC 15346 / NCIMB 9279 / VKM B-1422 / R1).